Here is a 298-residue protein sequence, read N- to C-terminus: tRNA (guanine(9)-N1)-methyltransferase (298 aa).

The span at 1–10 shows a compositional bias: polar residues; that stretch reads MSDTSENSNA. Residues 1-44 are disordered; that stretch reads MSDTSENSNAEIPADTSDVKDKPKPIVRAPQFPPPPEGISKSQW. The SAM-dependent MTase TRM10-type domain maps to 96–285; the sequence is PPKVNLNQSD…SVLPPRKLEV (190 aa). Residues 192-193, Gly212, 216-220, Cys224, Leu238, and 250-252 contribute to the S-adenosyl-L-methionine site; these read LT, DKNRH, and KVL. The active-site Proton acceptor is the Asp216.

This sequence belongs to the class IV-like SAM-binding methyltransferase superfamily. TRM10 family. As to quaternary structure, monomer.

The protein localises to the cytoplasm. The protein resides in the nucleus. The catalysed reaction is guanosine(9) in tRNA + S-adenosyl-L-methionine = N(1)-methylguanosine(9) in tRNA + S-adenosyl-L-homocysteine + H(+). In terms of biological role, S-adenosyl-L-methionine-dependent guanine N(1)-methyltransferase that catalyzes the formation of N(1)-methylguanine at position 9 (m1G9) in cytoplasmic tRNA. The polypeptide is tRNA (guanine(9)-N1)-methyltransferase (Kluyveromyces lactis (strain ATCC 8585 / CBS 2359 / DSM 70799 / NBRC 1267 / NRRL Y-1140 / WM37) (Yeast)).